The sequence spans 311 residues: Pyrimidine-specific ribonucleoside hydrolase RihA (311 aa).

His240 is an active-site residue.

It belongs to the IUNH family. RihA subfamily.

Its function is as follows. Hydrolyzes with equal efficiency cytidine or uridine to ribose and cytosine or uracil, respectively. This Escherichia coli O9:H4 (strain HS) protein is Pyrimidine-specific ribonucleoside hydrolase RihA.